Consider the following 504-residue polypeptide: Cytochrome P450 monooxygenase gliF (504 aa).

Residues 13–31 (AVAVSFGVGLLYWVYRLLL) traverse the membrane as a helical segment. N-linked (GlcNAc...) asparagine glycans are attached at residues Asn197 and Asn299. Residue Cys449 coordinates heme.

It belongs to the cytochrome P450 family. It depends on heme as a cofactor.

The protein localises to the membrane. It functions in the pathway mycotoxin biosynthesis. In terms of biological role, cytochrome P450 monooxygenase; part of the gene cluster that mediates the biosynthesis of gliotoxin, a member of the epipolythiodioxopiperazine (ETP) class of toxins characterized by a disulfide bridged cyclic dipeptide. The first step in gliotoxin biosynthesis is the condensation of serine and phenylalanine to form the cyclo-L-phenylalanyl-L-serine diketopiperazine (DKP) by the NRPS gliP. GliP is also able to produce the DKP cyclo-L-tryptophanyl-L-serine, suggesting that the substrate specificity of the first adenylation (A) domain in gliP is sufficiently relaxed to accommodate both L-Phe and L-Trp. The cytochrome P450 monooxygenase gliC has been shown to catalyze the subsequent hydroxylation of the alpha-carbon of L-Phe in cyclo-L-phenylalanyl-L-serine whereas the second cytochrome P450 enzyme, gliF, is presumably involved in the modification of the DKP side chain. The glutathione S-transferase (GST) gliG then forms a bis-glutathionylated biosynthetic intermediate which is responsible for the sulfurization of gliotoxin. This bis-glutathionylated intermediate is subsequently processed by the gamma-glutamyl cyclotransferase gliK to remove both gamma-glutamyl moieties. Subsequent processing via gliI yields a biosynthetic intermediate, which is N-methylated via the N-methyltransferase gliN, before the gliotoxin oxidoreductase gliT-mediated disulfide bridge closure. GliN-mediated amide methylation confers stability to ETP, damping the spontaneous formation of tri- and tetrasulfides. Intracellular dithiol gliotoxin oxidized by gliT is subsequently effluxed by gliA. Gliotoxin contributes to pathogenesis during invasive aspergillosis. In macrophages and neutrophils, gliotoxin showed inhibition of various different cell functions including cytokine production, antigen presentation, phagocytosis, and production of reactive oxygen species. The chain is Cytochrome P450 monooxygenase gliF from Aspergillus fumigatus (strain ATCC MYA-4609 / CBS 101355 / FGSC A1100 / Af293) (Neosartorya fumigata).